Here is a 638-residue protein sequence, read N- to C-terminus: Chaperone protein DnaK (638 aa).

Threonine 197 is subject to Phosphothreonine; by autocatalysis. The disordered stretch occupies residues 600–638 (SGAQGGAQAGPGAGAGQQANQGSSNNKEDIQDADFEEVK). The segment covering 602 to 614 (AQGGAQAGPGAGA) has biased composition (gly residues). The span at 615-624 (GQQANQGSSN) shows a compositional bias: low complexity. The span at 625–638 (NKEDIQDADFEEVK) shows a compositional bias: basic and acidic residues.

The protein belongs to the heat shock protein 70 family.

In terms of biological role, acts as a chaperone. The chain is Chaperone protein DnaK from Phocaeicola vulgatus (strain ATCC 8482 / DSM 1447 / JCM 5826 / CCUG 4940 / NBRC 14291 / NCTC 11154) (Bacteroides vulgatus).